A 156-amino-acid polypeptide reads, in one-letter code: uncharacterized protein (156 aa).

The N-terminal stretch at 1–27 (MKLLVLRLILIISTIFVLLNLSCMVNG) is a signal peptide. N-linked (GlcNAc...) asparagine glycans are attached at residues N20, N83, N103, N106, and N134.

The protein resides in the secreted. This is an uncharacterized protein from Dictyostelium discoideum (Social amoeba).